Reading from the N-terminus, the 717-residue chain is Acetone carboxylase beta subunit (717 aa).

In terms of assembly, heterohexamer of two alpha, two beta and two gamma subunits. Fe cation is required as a cofactor. Mg(2+) serves as cofactor. The cofactor is Zn(2+). Post-translationally, the N-terminus is blocked.

The catalysed reaction is acetone + hydrogencarbonate + 2 ATP + 3 H2O = acetoacetate + 2 AMP + 4 phosphate + 4 H(+). Functionally, catalyzes the carboxylation of acetone to form acetoacetate. Has a reduced activity on butanone, and no activity on 2-pentatone, 3-pentatone, 2-hexanone, chloroacetone, pyruvate, phosphoenolpyruvate, acetaldehyde, propionaldehyde and propylene oxide. The protein is Acetone carboxylase beta subunit of Xanthobacter autotrophicus (strain ATCC BAA-1158 / Py2).